A 128-amino-acid chain; its full sequence is Glycine cleavage system H protein (128 aa).

Positions 22 to 104 constitute a Lipoyl-binding domain; that stretch reads VATVGITEHA…YGEGWIFKMK (83 aa). Lys-63 is subject to N6-lipoyllysine.

The protein belongs to the GcvH family. In terms of assembly, the glycine cleavage system is composed of four proteins: P, T, L and H. (R)-lipoate is required as a cofactor.

In terms of biological role, the glycine cleavage system catalyzes the degradation of glycine. The H protein shuttles the methylamine group of glycine from the P protein to the T protein. The chain is Glycine cleavage system H protein from Methylacidiphilum infernorum (isolate V4) (Methylokorus infernorum (strain V4)).